The chain runs to 185 residues: Peptide deformylase 2 (185 aa).

2 residues coordinate Fe cation: Cys108 and His150. Glu151 is an active-site residue. His154 contacts Fe cation.

Belongs to the polypeptide deformylase family. Requires Fe(2+) as cofactor.

It catalyses the reaction N-terminal N-formyl-L-methionyl-[peptide] + H2O = N-terminal L-methionyl-[peptide] + formate. Removes the formyl group from the N-terminal Met of newly synthesized proteins. Requires at least a dipeptide for an efficient rate of reaction. N-terminal L-methionine is a prerequisite for activity but the enzyme has broad specificity at other positions. The protein is Peptide deformylase 2 of Nitrosomonas europaea (strain ATCC 19718 / CIP 103999 / KCTC 2705 / NBRC 14298).